The sequence spans 160 residues: Cyclic pyranopterin monophosphate synthase (160 aa).

Substrate contacts are provided by residues 77–79 (LCH) and 114–115 (ME). Residue Asp129 is part of the active site.

This sequence belongs to the MoaC family. In terms of assembly, homohexamer; trimer of dimers.

The enzyme catalyses (8S)-3',8-cyclo-7,8-dihydroguanosine 5'-triphosphate = cyclic pyranopterin phosphate + diphosphate. The protein operates within cofactor biosynthesis; molybdopterin biosynthesis. Functionally, catalyzes the conversion of (8S)-3',8-cyclo-7,8-dihydroguanosine 5'-triphosphate to cyclic pyranopterin monophosphate (cPMP). The polypeptide is Cyclic pyranopterin monophosphate synthase (Alcanivorax borkumensis (strain ATCC 700651 / DSM 11573 / NCIMB 13689 / SK2)).